The chain runs to 468 residues: Glutamate--tRNA ligase (468 aa).

A 'HIGH' region motif is present at residues 12–22 (PSPTGFIHLGN). The short motif at 244–248 (KMSKR) is the 'KMSKS' region element. K247 contributes to the ATP binding site.

The protein belongs to the class-I aminoacyl-tRNA synthetase family. Glutamate--tRNA ligase type 1 subfamily. In terms of assembly, monomer.

It localises to the cytoplasm. The catalysed reaction is tRNA(Glu) + L-glutamate + ATP = L-glutamyl-tRNA(Glu) + AMP + diphosphate. Its function is as follows. Catalyzes the attachment of glutamate to tRNA(Glu) in a two-step reaction: glutamate is first activated by ATP to form Glu-AMP and then transferred to the acceptor end of tRNA(Glu). The chain is Glutamate--tRNA ligase from Polynucleobacter asymbioticus (strain DSM 18221 / CIP 109841 / QLW-P1DMWA-1) (Polynucleobacter necessarius subsp. asymbioticus).